The chain runs to 784 residues: Transcription factor E4F1 (784 aa).

Residues 41–85 (GFLGLPAPFSEEDEDDVHRCGRCQAEFTALEDFVQHKIQKACQRA) are required for ubiquitin ligase activity. Ser-50 carries the post-translational modification Phosphoserine. The interval 184–263 (LLVNKDGRYV…GKSFRESGAL (80 aa)) is mediates dimerization, DNA-binding, transcription repression of CCNA2 and interaction with HMGA2. C2H2-type zinc fingers lie at residues 192 to 214 (YVCALCHKTFKTGSILKAHMVTH) and 220 to 242 (HECKLCGASFRTKGSLIRHHRRH). The C2H2-type 3; degenerate zinc-finger motif lies at 248-272 (YKCSKCGKSFRESGALTRHLKSLTP). The mediates interaction with CDKN2A stretch occupies residues 369-566 (NLLHQAMQNS…REKGSLVRHV (198 aa)). 5 consecutive C2H2-type zinc fingers follow at residues 435–457 (HPCPQCSETFPTAATLEAHKRGH), 463–485 (FACAQCGKAFPKAYLLKKHQEVH), 491–513 (FRCGDCGKLYKTIAHVRGHRRVH), 519–541 (YPCPKCGKRYKTKNAQQVHFRTH), and 547–569 (HVCQFCSRGFREKGSLVRHVRHH). An interaction with BMI1 region spans residues 435-599 (HPCPQCSETF…LNRHLRTKGG (165 aa)). Residues 521–580 (CPKCGKRYKTKNAQQVHFRTHLEEKPHVCQFCSRGFREKGSLVRHVRHHTGEKPFKCYKC) are mediates interaction with TP53. The C2H2-type 9; degenerate zinc-finger motif lies at 575–597 (FKCYKCGRGFAEHGTLNRHLRTK). The interval 575 to 597 (FKCYKCGRGFAEHGTLNRHLRTK) is mediates interaction with RASSF1.

In terms of assembly, homodimer; binds DNA as a dimer. Forms a complex with CDKN2A and TP53. Interactions with TP53, RB1, ANP32A, BMI1 and FHL2 regulate E4F1 activity. Interacts with HDAC1, HMGA2 and RASSF1. As to quaternary structure, (Microbial infection) Interacts with HBV protein X. Proteolytic cleavage produces a 50 kDa N-terminal peptide (p50E4F) which has a DNA-binding activity and activates transcription in presence of the adenoviral E1A protein. The major full-length protein (p120E4F) functions as a repressor of transcription. Post-translationally, phosphorylated; p120E4F and p50E4F are both phosphorylated. Phosphorylation is cell cycle-dependent and differentially regulates DNA-binding activity and function of both forms. In terms of processing, may be sumoylated by UBE2I upon interaction with CDKN2A. As to expression, ubiquitously expressed.

It localises to the nucleus. It is found in the nucleoplasm. Its subcellular location is the cytoplasm. It carries out the reaction S-ubiquitinyl-[E2 ubiquitin-conjugating enzyme]-L-cysteine + [acceptor protein]-L-lysine = [E2 ubiquitin-conjugating enzyme]-L-cysteine + N(6)-ubiquitinyl-[acceptor protein]-L-lysine.. The protein operates within protein modification; protein ubiquitination. Functionally, may function as a transcriptional repressor. May also function as a ubiquitin ligase mediating ubiquitination of chromatin-associated TP53. Functions in cell survival and proliferation through control of the cell cycle. Functions in the p53 and pRB tumor suppressor pathways and regulates the cyclin CCNA2 transcription. Its function is as follows. Identified as a cellular target of the adenoviral oncoprotein E1A, it is required for both transcriptional activation and repression of viral genes. The polypeptide is Transcription factor E4F1 (E4F1) (Homo sapiens (Human)).